The primary structure comprises 432 residues: Elongation factor 1-gamma (432 aa).

The GST N-terminal domain occupies 1–82 (LYTYPENWRA…YVSNEELRGS (82 aa)). The GST C-terminal domain maps to 83–211 (TPEAAAQVVQ…VKLCEKMAQF (129 aa)). An N6-acetyllysine mark is found at lysine 142 and lysine 207. The segment covering 216-249 (FAESQPKKDTPRKEKGSREEKQKPQAERKEEKKA) has biased composition (basic and acidic residues). Residues 216–258 (FAESQPKKDTPRKEKGSREEKQKPQAERKEEKKAAAPAPEEEL) are disordered. Lysine 248 is covalently cross-linked (Glycyl lysine isopeptide (Lys-Gly) (interchain with G-Cter in SUMO1)). The region spanning 271–432 (AKDPFAHLPK…KAFNQGKIFK (162 aa)) is the EF-1-gamma C-terminal domain. Lysine 280 is covalently cross-linked (Glycyl lysine isopeptide (Lys-Gly) (interchain with G-Cter in SUMO2)). Lysine 396 bears the N6-acetyllysine mark. N6-acetyllysine; alternate is present on lysine 429. Lysine 429 carries the N6-malonyllysine; alternate modification.

EF-1 is composed of four subunits: alpha, beta, delta, and gamma.

Functionally, probably plays a role in anchoring the complex to other cellular components. This chain is Elongation factor 1-gamma (EEF1G), found in Sus scrofa (Pig).